Here is a 201-residue protein sequence, read N- to C-terminus: Small ribosomal subunit protein uS4c (201 aa).

The disordered stretch occupies residues 20 to 44 (GLTSKRPTVGSELRNQSRSTKKSQY). Residues 89–150 (MRLDNILFRL…NKKSKTLIQN (62 aa)) form the S4 RNA-binding domain.

It belongs to the universal ribosomal protein uS4 family. In terms of assembly, part of the 30S ribosomal subunit. Contacts protein S5. The interaction surface between S4 and S5 is involved in control of translational fidelity.

The protein resides in the plastid. It localises to the chloroplast. Its function is as follows. One of the primary rRNA binding proteins, it binds directly to 16S rRNA where it nucleates assembly of the body of the 30S subunit. In terms of biological role, with S5 and S12 plays an important role in translational accuracy. The chain is Small ribosomal subunit protein uS4c (rps4) from Lotus japonicus (Lotus corniculatus var. japonicus).